A 579-amino-acid chain; its full sequence is Glypican-2 (579 aa).

Residues 1–23 form the signal peptide; that stretch reads MSALRPLLLLLLPLCPGPGPGPG. O-linked (Xyl...) (heparan sulfate) serine glycosylation is found at Ser55, Ser92, and Ser155. 2 disordered regions span residues 444–468 and 485–555; these read GGSP…VPTR and ALGH…RSGG. Residues Ser500 and Ser502 are each glycosylated (O-linked (Xyl...) (heparan sulfate) serine). Positions 520–529 are enriched in pro residues; it reads PARPPRPPYP. Gly554 carries GPI-anchor amidated glycine lipidation. Residues 555-579 constitute a propeptide, removed in mature form; sequence GASIGFHTQTILILSLSALALLGPR.

It belongs to the glypican family. Interacts (via heparan sulfate) with PTN; this interaction promotes neurite outgrowth through binding of PTN with chondroitin sulfate of proteoglycans, thereby releasing PTPRS of chondroitin sulfate proteoglycans (CSPGs) and leading to binding with heparan sulfate of GPC2. Interacts (heparan sulfate chain) with MDK; this interaction is inhibited by heparin followed by chondroitin sulfate E; this interaction induces GPC2 clustering through heparan sulfate chain; this interaction induces neuronal cell adhesion and neurite outgrowth.

Its subcellular location is the cell membrane. It is found in the secreted. The protein localises to the extracellular space. Cell surface proteoglycan that bears heparan sulfate. May fulfill a function related to the motile behaviors of developing neurons. The chain is Glypican-2 (GPC2) from Homo sapiens (Human).